The following is a 784-amino-acid chain: LPS-assembly protein LptD (784 aa).

The N-terminal stretch at 1 to 24 (MKKRIPTLLATMIATALYSQQGLA) is a signal peptide. Cystine bridges form between Cys31–Cys724 and Cys173–Cys725.

This sequence belongs to the LptD family. As to quaternary structure, component of the lipopolysaccharide transport and assembly complex. Interacts with LptE and LptA. May interact with LptE during assembly of LptD by the beta-barrel assembly machine (BAM). Also interacts with LptM, which promotes the efficient assembly of the LptDE translocon by the BAM complex. Contains two intramolecular disulfide bonds. At least one disulfide bond is required for activity, and protein is probably fully oxidized in vivo.

The protein resides in the cell outer membrane. Together with LptE, is involved in the assembly of lipopolysaccharide (LPS) at the surface of the outer membrane. Contributes to n-hexane resistance. The protein is LPS-assembly protein LptD of Escherichia coli (strain K12).